Reading from the N-terminus, the 306-residue chain is Epoxyqueuosine reductase (306 aa).

The Proton donor role is filled by aspartate 131. A 4Fe-4S ferredoxin-type domain is found at 173–205 (LDLTYDHPVTDHCGTCTACIDACPTQAIVQPYV). 8 residues coordinate [4Fe-4S] cluster: cysteine 185, cysteine 188, cysteine 191, cysteine 195, cysteine 211, cysteine 238, cysteine 241, and cysteine 245.

It belongs to the QueG family. As to quaternary structure, monomer. Cob(II)alamin is required as a cofactor. Requires [4Fe-4S] cluster as cofactor.

It is found in the cytoplasm. The catalysed reaction is epoxyqueuosine(34) in tRNA + AH2 = queuosine(34) in tRNA + A + H2O. It functions in the pathway tRNA modification; tRNA-queuosine biosynthesis. In terms of biological role, catalyzes the conversion of epoxyqueuosine (oQ) to queuosine (Q), which is a hypermodified base found in the wobble positions of tRNA(Asp), tRNA(Asn), tRNA(His) and tRNA(Tyr). This chain is Epoxyqueuosine reductase, found in Cellulophaga algicola (strain DSM 14237 / IC166 / ACAM 630).